Here is a 273-residue protein sequence, read N- to C-terminus: Thymidylate synthase (273 aa).

Arg31 is a binding site for dUMP. His61 serves as a coordination point for (6R)-5,10-methylene-5,6,7,8-tetrahydrofolate. Position 136–137 (136–137 (RR)) interacts with dUMP. The Nucleophile role is filled by Cys156. DUMP contacts are provided by residues 176–179 (RSAD), Asn187, and 217–219 (HIY). Residue Asp179 coordinates (6R)-5,10-methylene-5,6,7,8-tetrahydrofolate. Ala272 is a binding site for (6R)-5,10-methylene-5,6,7,8-tetrahydrofolate.

This sequence belongs to the thymidylate synthase family. Bacterial-type ThyA subfamily. As to quaternary structure, homodimer.

Its subcellular location is the cytoplasm. It carries out the reaction dUMP + (6R)-5,10-methylene-5,6,7,8-tetrahydrofolate = 7,8-dihydrofolate + dTMP. Its pathway is pyrimidine metabolism; dTTP biosynthesis. Catalyzes the reductive methylation of 2'-deoxyuridine-5'-monophosphate (dUMP) to 2'-deoxythymidine-5'-monophosphate (dTMP) while utilizing 5,10-methylenetetrahydrofolate (mTHF) as the methyl donor and reductant in the reaction, yielding dihydrofolate (DHF) as a by-product. This enzymatic reaction provides an intracellular de novo source of dTMP, an essential precursor for DNA biosynthesis. In Corynebacterium jeikeium (strain K411), this protein is Thymidylate synthase.